The chain runs to 1167 residues: ATP-dependent helicase/deoxyribonuclease subunit B (1167 aa).

A UvrD-like helicase ATP-binding domain is found at 1–359 (MSLRFLLGRS…IRQTEAYRDL (359 aa)). 8–15 (GRSGSGKT) lines the ATP pocket. The UvrD-like helicase C-terminal domain occupies 282–588 (VNRRHQDKAL…EFALVPPAID (307 aa)). Cysteine 803, cysteine 1125, cysteine 1128, and cysteine 1134 together coordinate [4Fe-4S] cluster.

It belongs to the helicase family. AddB/RexB type 1 subfamily. Heterodimer of AddA and AddB. It depends on Mg(2+) as a cofactor. [4Fe-4S] cluster is required as a cofactor.

Functionally, the heterodimer acts as both an ATP-dependent DNA helicase and an ATP-dependent, dual-direction single-stranded exonuclease. Recognizes the chi site generating a DNA molecule suitable for the initiation of homologous recombination. The AddB subunit has 5' -&gt; 3' nuclease activity but not helicase activity. This chain is ATP-dependent helicase/deoxyribonuclease subunit B, found in Geobacillus thermodenitrificans (strain NG80-2).